The chain runs to 152 residues: Small ribosomal subunit protein uS19u (152 aa).

This sequence belongs to the universal ribosomal protein uS19 family.

The protein resides in the cytoplasm. This Arabidopsis thaliana (Mouse-ear cress) protein is Small ribosomal subunit protein uS19u (RPS15A).